A 939-amino-acid polypeptide reads, in one-letter code: Isoleucine--tRNA ligase (939 aa).

A 'HIGH' region motif is present at residues Pro59–His69. Glu570 provides a ligand contact to L-isoleucyl-5'-AMP. The short motif at Lys611–Ser615 is the 'KMSKS' region element. Lys614 contacts ATP. Zn(2+)-binding residues include Cys902, Cys905, Cys922, and Cys925.

It belongs to the class-I aminoacyl-tRNA synthetase family. IleS type 1 subfamily. In terms of assembly, monomer. Zn(2+) is required as a cofactor.

It is found in the cytoplasm. It catalyses the reaction tRNA(Ile) + L-isoleucine + ATP = L-isoleucyl-tRNA(Ile) + AMP + diphosphate. Functionally, catalyzes the attachment of isoleucine to tRNA(Ile). As IleRS can inadvertently accommodate and process structurally similar amino acids such as valine, to avoid such errors it has two additional distinct tRNA(Ile)-dependent editing activities. One activity is designated as 'pretransfer' editing and involves the hydrolysis of activated Val-AMP. The other activity is designated 'posttransfer' editing and involves deacylation of mischarged Val-tRNA(Ile). The protein is Isoleucine--tRNA ligase of Nitrosomonas europaea (strain ATCC 19718 / CIP 103999 / KCTC 2705 / NBRC 14298).